Here is a 180-residue protein sequence, read N- to C-terminus: Large ribosomal subunit protein uL5 (180 aa).

This sequence belongs to the universal ribosomal protein uL5 family. In terms of assembly, part of the 50S ribosomal subunit; part of the 5S rRNA/L5/L18/L25 subcomplex. Contacts the 5S rRNA and the P site tRNA. Forms a bridge to the 30S subunit in the 70S ribosome.

Its function is as follows. This is one of the proteins that bind and probably mediate the attachment of the 5S RNA into the large ribosomal subunit, where it forms part of the central protuberance. In the 70S ribosome it contacts protein S13 of the 30S subunit (bridge B1b), connecting the 2 subunits; this bridge is implicated in subunit movement. Contacts the P site tRNA; the 5S rRNA and some of its associated proteins might help stabilize positioning of ribosome-bound tRNAs. The polypeptide is Large ribosomal subunit protein uL5 (Chloroflexus aggregans (strain MD-66 / DSM 9485)).